A 380-amino-acid chain; its full sequence is Chaperone protein DnaJ (380 aa).

A J domain is found at Asp5 to Gly69. The segment at Gly135–Arg217 adopts a CR-type zinc-finger fold. The Zn(2+) site is built by Cys148, Cys151, Cys165, Cys168, Cys191, Cys194, Cys205, and Cys208. CXXCXGXG motif repeat units follow at residues Cys148–Gly155, Cys165–Gly172, Cys191–Gly198, and Cys205–Gly212.

It belongs to the DnaJ family. As to quaternary structure, homodimer. Zn(2+) is required as a cofactor.

Its subcellular location is the cytoplasm. In terms of biological role, participates actively in the response to hyperosmotic and heat shock by preventing the aggregation of stress-denatured proteins and by disaggregating proteins, also in an autonomous, DnaK-independent fashion. Unfolded proteins bind initially to DnaJ; upon interaction with the DnaJ-bound protein, DnaK hydrolyzes its bound ATP, resulting in the formation of a stable complex. GrpE releases ADP from DnaK; ATP binding to DnaK triggers the release of the substrate protein, thus completing the reaction cycle. Several rounds of ATP-dependent interactions between DnaJ, DnaK and GrpE are required for fully efficient folding. Also involved, together with DnaK and GrpE, in the DNA replication of plasmids through activation of initiation proteins. The protein is Chaperone protein DnaJ of Parageobacillus thermoglucosidasius (Geobacillus thermoglucosidasius).